The sequence spans 235 residues: Probable deoxycytidine kinase FPV151 (235 aa).

30–38 is an ATP binding site; the sequence is GNISAGKST. Glu53, Tyr68, and Gln79 together coordinate substrate. The active-site Proton acceptor is Glu104. 3 residues coordinate substrate: Arg105, Asp110, and Glu172.

It belongs to the DCK/DGK family.

It catalyses the reaction 2'-deoxycytidine + a ribonucleoside 5'-triphosphate = dCMP + a ribonucleoside 5'-diphosphate + H(+). The chain is Probable deoxycytidine kinase FPV151 from Vertebrata (FPV).